The sequence spans 236 residues: Small ribosomal subunit protein uS2c (236 aa).

The protein belongs to the universal ribosomal protein uS2 family.

The protein resides in the plastid. Its subcellular location is the chloroplast. This Phalaenopsis aphrodite subsp. formosana (Moth orchid) protein is Small ribosomal subunit protein uS2c (rps2).